Reading from the N-terminus, the 388-residue chain is Putative membrane protein MJ1562 (388 aa).

6 consecutive transmembrane segments (helical) span residues 22 to 42, 219 to 239, 246 to 266, 273 to 293, 320 to 340, and 351 to 371; these read FLML…ATNV, SQSF…IIYF, IMPL…MGLL, ATAG…IHLM, AVMA…LAPL, and ALGI…LIVI.

It belongs to the resistance-nodulation-cell division (RND) (TC 2.A.6) family. MmpL subfamily.

The protein localises to the cell membrane. The chain is Putative membrane protein MJ1562 from Methanocaldococcus jannaschii (strain ATCC 43067 / DSM 2661 / JAL-1 / JCM 10045 / NBRC 100440) (Methanococcus jannaschii).